The primary structure comprises 335 residues: Pregnancy-specific beta-1-glycoprotein 5 (335 aa).

A signal peptide spans 1–34 (MGPLSAPPCTQHITWKGLLLTASLLNFWNLPITA). The region spanning 35-144 (QVTIEALPPK…TGYFTFNLYL (110 aa)) is the Ig-like V-type domain. N-linked (GlcNAc...) asparagine glycans are attached at residues asparagine 104 and asparagine 111. The Cell attachment site motif lies at 127-129 (RGD). 2 Ig-like C2-type domains span residues 147–234 (PKPY…VTLN) and 239–317 (PDLP…KSMT). Cystine bridges form between cysteine 169-cysteine 217 and cysteine 261-cysteine 301. N-linked (GlcNAc...) asparagine glycosylation is found at asparagine 175 and asparagine 210.

The protein belongs to the immunoglobulin superfamily. CEA family. In terms of tissue distribution, synthesized by syncytiotrophoblast of the placenta.

Its subcellular location is the secreted. The protein is Pregnancy-specific beta-1-glycoprotein 5 (PSG5) of Homo sapiens (Human).